Here is a 209-residue protein sequence, read N- to C-terminus: Response regulator protein VraR (209 aa).

The region spanning 4–120 (KVLFVDDHEM…DIADAVRKTY (117 aa)) is the Response regulatory domain. Residue D55 is modified to 4-aspartylphosphate. The HTH luxR-type domain occupies 141-206 (RAELYEMLTE…QAVIYAFQHN (66 aa)). The H-T-H motif DNA-binding region spans 165–184 (NQEIASASHITIKTVKTHVS).

In terms of processing, phosphorylated by VraS.

It is found in the cytoplasm. Its function is as follows. Member of the two-component regulatory system VraS/VraR involved in the control of the cell wall peptidoglycan biosynthesis. The sequence is that of Response regulator protein VraR (vraR) from Staphylococcus epidermidis (strain ATCC 35984 / DSM 28319 / BCRC 17069 / CCUG 31568 / BM 3577 / RP62A).